A 135-amino-acid polypeptide reads, in one-letter code: Large ribosomal subunit protein uL22 (135 aa).

Belongs to the universal ribosomal protein uL22 family. In terms of assembly, part of the 50S ribosomal subunit.

Its function is as follows. This protein binds specifically to 23S rRNA; its binding is stimulated by other ribosomal proteins, e.g. L4, L17, and L20. It is important during the early stages of 50S assembly. It makes multiple contacts with different domains of the 23S rRNA in the assembled 50S subunit and ribosome. In terms of biological role, the globular domain of the protein is located near the polypeptide exit tunnel on the outside of the subunit, while an extended beta-hairpin is found that lines the wall of the exit tunnel in the center of the 70S ribosome. In Christiangramia forsetii (strain DSM 17595 / CGMCC 1.15422 / KT0803) (Gramella forsetii), this protein is Large ribosomal subunit protein uL22.